A 426-amino-acid chain; its full sequence is Serine--tRNA ligase (426 aa).

L-serine is bound at residue 233 to 235; sequence TAE. Residue 264–266 coordinates ATP; that stretch reads RSE. L-serine is bound at residue glutamate 287. 351 to 354 serves as a coordination point for ATP; it reads EISS. Serine 387 contributes to the L-serine binding site.

Belongs to the class-II aminoacyl-tRNA synthetase family. Type-1 seryl-tRNA synthetase subfamily. Homodimer. The tRNA molecule binds across the dimer.

Its subcellular location is the cytoplasm. It catalyses the reaction tRNA(Ser) + L-serine + ATP = L-seryl-tRNA(Ser) + AMP + diphosphate + H(+). The enzyme catalyses tRNA(Sec) + L-serine + ATP = L-seryl-tRNA(Sec) + AMP + diphosphate + H(+). It functions in the pathway aminoacyl-tRNA biosynthesis; selenocysteinyl-tRNA(Sec) biosynthesis; L-seryl-tRNA(Sec) from L-serine and tRNA(Sec): step 1/1. Functionally, catalyzes the attachment of serine to tRNA(Ser). Is also able to aminoacylate tRNA(Sec) with serine, to form the misacylated tRNA L-seryl-tRNA(Sec), which will be further converted into selenocysteinyl-tRNA(Sec). The polypeptide is Serine--tRNA ligase (Pseudomonas syringae pv. syringae (strain B728a)).